The sequence spans 539 residues: D-mannonate oxidoreductase (539 aa).

NAD(+) is bound at residue 39-50; it reads WVHFGGGNIFRG.

Belongs to the mannitol dehydrogenase family. UxuB subfamily.

The catalysed reaction is D-mannonate + NAD(+) = keto-D-fructuronate + NADH + H(+). It functions in the pathway carbohydrate metabolism. In terms of biological role, catalyzes the reduction of D-fructuronate (D-FruA) to D-mannonate (D-ManA). This chain is D-mannonate oxidoreductase, found in Thermotoga maritima (strain ATCC 43589 / DSM 3109 / JCM 10099 / NBRC 100826 / MSB8).